We begin with the raw amino-acid sequence, 326 residues long: Phenylalanine--tRNA ligase alpha subunit (326 aa).

Residue E251 participates in Mg(2+) binding.

Belongs to the class-II aminoacyl-tRNA synthetase family. Phe-tRNA synthetase alpha subunit type 1 subfamily. Tetramer of two alpha and two beta subunits. Mg(2+) is required as a cofactor.

The protein resides in the cytoplasm. The enzyme catalyses tRNA(Phe) + L-phenylalanine + ATP = L-phenylalanyl-tRNA(Phe) + AMP + diphosphate + H(+). This is Phenylalanine--tRNA ligase alpha subunit from Pseudoalteromonas atlantica (strain T6c / ATCC BAA-1087).